Here is a 604-residue protein sequence, read N- to C-terminus: NRPS-independent siderophore synthetase-like protein ankE (604 aa).

The catalysed reaction is cyclo(L-arginyl-(Z)-dehydro-4-O-homoseryl-tyrosyl) + citrate + ATP = NK13650 B + AMP + diphosphate + H(+). The protein operates within secondary metabolite biosynthesis. Functionally, NRPS-independent siderophore synthetase-like protein; part of the ank cluster that mediates the biosynthesis of NK13650 C, a highly modified cyclo-arginine-tyrosine dipeptide. AnkE is responsible of the production of NK13650 B via ligation of citrate to the ankD product. Within the pathway, the cyclodipeptide synthase ankA acts as the scaffold-generating enzyme and is responsible for formation of the cyclo-Arg-Tyr diketopiperazine (cRY) from L-Arg and L-Tyr. The ankA product cRY is desaturated by the cytochrome P450 monooxygenase ankB to yield a dehydro-cyclodipeptide intermediate. The FAD-dependent monooxygenase ankC then installs the m-OH, ankD catalyzes the attachment of L-homoserine, and ankE ligates citrate to the ankD product to yield NK13650 B. The O-methyltransferase ankF is responsible for methylation of the C-17 phenol group of NK13650 B to produce NK13650 D. Amidation of NK13650 D with L-Asp by ankG then leads to the production of NK13650 C, whereas amidation of NK13650 B produces NK13650 A. The sequence is that of NRPS-independent siderophore synthetase-like protein ankE from Aspergillus thermomutatus (Neosartorya pseudofischeri).